A 529-amino-acid chain; its full sequence is GMP synthase [glutamine-hydrolyzing] (529 aa).

The Glutamine amidotransferase type-1 domain occupies 13-204 (PVLVVDFGAQ…LLETAGLEPT (192 aa)). Catalysis depends on C90, which acts as the Nucleophile. Residues H178 and E180 contribute to the active site. The region spanning 205 to 403 (WTAGNIAEQL…LGLPEEIVAR (199 aa)) is the GMPS ATP-PPase domain. 233-239 (SGGVDSA) contacts ATP.

Homodimer.

It carries out the reaction XMP + L-glutamine + ATP + H2O = GMP + L-glutamate + AMP + diphosphate + 2 H(+). It participates in purine metabolism; GMP biosynthesis; GMP from XMP (L-Gln route): step 1/1. Catalyzes the synthesis of GMP from XMP. The protein is GMP synthase [glutamine-hydrolyzing] of Corynebacterium jeikeium (strain K411).